A 96-amino-acid polypeptide reads, in one-letter code: DNA-directed RNA polymerase subunit Rpo11 (96 aa).

The protein belongs to the archaeal Rpo11/eukaryotic RPB11/RPC19 RNA polymerase subunit family. Part of the RNA polymerase complex.

The protein resides in the cytoplasm. The enzyme catalyses RNA(n) + a ribonucleoside 5'-triphosphate = RNA(n+1) + diphosphate. Functionally, DNA-dependent RNA polymerase (RNAP) catalyzes the transcription of DNA into RNA using the four ribonucleoside triphosphates as substrates. The protein is DNA-directed RNA polymerase subunit Rpo11 of Haloquadratum walsbyi (strain DSM 16790 / HBSQ001).